Consider the following 534-residue polypeptide: Peptide chain release factor 3 (534 aa).

The 270-residue stretch at 9-278 folds into the tr-type G domain; it reads ARRRTFAIIS…FFVEHAPSPQ (270 aa). GTP-binding positions include 18-25, 86-90, and 140-143; these read SHPDAGKT, DTPGH, and NKLD.

The protein belongs to the TRAFAC class translation factor GTPase superfamily. Classic translation factor GTPase family. PrfC subfamily.

Its subcellular location is the cytoplasm. Functionally, increases the formation of ribosomal termination complexes and stimulates activities of RF-1 and RF-2. It binds guanine nucleotides and has strong preference for UGA stop codons. It may interact directly with the ribosome. The stimulation of RF-1 and RF-2 is significantly reduced by GTP and GDP, but not by GMP. This Xylella fastidiosa (strain M23) protein is Peptide chain release factor 3.